Reading from the N-terminus, the 88-residue chain is DNA-directed RNA polymerase subunit omega (88 aa).

It belongs to the RNA polymerase subunit omega family. As to quaternary structure, the RNAP catalytic core consists of 2 alpha, 1 beta, 1 beta' and 1 omega subunit. When a sigma factor is associated with the core the holoenzyme is formed, which can initiate transcription.

The catalysed reaction is RNA(n) + a ribonucleoside 5'-triphosphate = RNA(n+1) + diphosphate. Promotes RNA polymerase assembly. Latches the N- and C-terminal regions of the beta' subunit thereby facilitating its interaction with the beta and alpha subunits. In Anaeromyxobacter dehalogenans (strain 2CP-1 / ATCC BAA-258), this protein is DNA-directed RNA polymerase subunit omega.